A 241-amino-acid polypeptide reads, in one-letter code: Neuroendocrine secretory protein 55 (241 aa).

A signal peptide spans 1-46 (MDRRSRPQLGRRARHNYNDLCPPIGRRAATALLWLSCSIALLRALA). Positions 71–241 (AAQVFPEPPE…KRGAIPIRRH (171 aa)) are disordered. A compositionally biased stretch (acidic residues) spans 97–125 (EYQEEEFDYESETESESEIESETEFETES). Positions 167–177 (PDASPSRAPPS) are enriched in low complexity. The span at 182 to 198 (ESPRQGEEPEDKDPRDP) shows a compositional bias: basic and acidic residues. Over residues 212-221 (QHRCKPKKPT) the composition is skewed to basic residues.

Belongs to the NESP55 family. In terms of processing, binds keratan sulfate chains. May be proteolytically processed to give rise to a number of active peptides. As to expression, highly expressed in adrenal medulla and anterior and posterior pituitary. In the brain, detected in hypothalamus, hippocampus, caudate nucleus, thalamus and, in significantly lower amounts, in the cerebellum.

The protein localises to the cytoplasmic vesicle. The protein resides in the secretory vesicle. It is found in the secreted. In Bos taurus (Bovine), this protein is Neuroendocrine secretory protein 55.